The following is a 148-amino-acid chain: 3-hydroxyacyl-[acyl-carrier-protein] dehydratase FabZ (148 aa).

Histidine 48 is an active-site residue.

It belongs to the thioester dehydratase family. FabZ subfamily.

Its subcellular location is the cytoplasm. It catalyses the reaction a (3R)-hydroxyacyl-[ACP] = a (2E)-enoyl-[ACP] + H2O. Functionally, involved in unsaturated fatty acids biosynthesis. Catalyzes the dehydration of short chain beta-hydroxyacyl-ACPs and long chain saturated and unsaturated beta-hydroxyacyl-ACPs. This chain is 3-hydroxyacyl-[acyl-carrier-protein] dehydratase FabZ, found in Campylobacter curvus (strain 525.92).